The primary structure comprises 1182 residues: IQ motif and SEC7 domain-containing protein 3 (1182 aa).

Residues Ala-20–His-56 are a coiled coil. 2 disordered regions span residues Ala-62–Pro-157 and Ala-230–Pro-275. A compositionally biased stretch (pro residues) spans Gln-63–Ala-78. Low complexity-rich tracts occupy residues Ala-79 to Pro-105 and Gly-254 to Gly-263. At Ser-259 the chain carries Phosphoserine. The IQ domain occupies Ser-315–Glu-344. 2 disordered regions span residues Ala-444–Gly-479 and Glu-521–Ser-616. Positions Ser-533 to Ala-548 are enriched in basic and acidic residues. The span at Ala-555–Pro-569 shows a compositional bias: low complexity. A compositionally biased stretch (acidic residues) spans Glu-572–Ala-581. The span at Ser-598 to Ser-616 shows a compositional bias: low complexity. One can recognise an SEC7 domain in the interval Thr-644–Lys-837. Residues Thr-850 to Glu-983 enclose the PH domain. Residues Ser-964–Glu-992 are a coiled coil. Disordered stretches follow at residues Leu-1002–Leu-1090 and Tyr-1121–Val-1182. The segment covering Ala-1022–Ala-1033 has biased composition (basic and acidic residues). The span at Asn-1043–Ser-1052 shows a compositional bias: polar residues. Positions Pro-1061 to Pro-1087 are enriched in pro residues. The span at Tyr-1121–Thr-1132 shows a compositional bias: low complexity. Positions Pro-1147–Asn-1157 are enriched in pro residues.

Belongs to the BRAG family. Interacts with DLG1 and DLG4. Interacts with GPHN. In terms of tissue distribution, expressed specifically in the adult brain, predominantly in the cerebral cortex and the olfactory bulb, but not in the fetal brain. Expressed only in mature neurons, but not in undifferentiated neural stem precursor cells (NSPCs), nor in glioma cells.

Its subcellular location is the cytoplasm. The protein localises to the postsynaptic density. Its function is as follows. Acts as a guanine nucleotide exchange factor (GEF) for ARF1. In Homo sapiens (Human), this protein is IQ motif and SEC7 domain-containing protein 3 (IQSEC3).